A 69-amino-acid chain; its full sequence is Sec-independent protein translocase protein TatA (69 aa).

A helical transmembrane segment spans residues 1-21 (MFPKLGMGELVVILLIVVILF). Positions 43–69 (SFSGEDEEKPSTPGATSSDEASKAKQA) are disordered.

This sequence belongs to the TatA/E family. The Tat system comprises two distinct complexes: a TatABC complex, containing multiple copies of TatA, TatB and TatC subunits, and a separate TatA complex, containing only TatA subunits. Substrates initially bind to the TatABC complex, which probably triggers association of the separate TatA complex to form the active translocon.

It localises to the cell inner membrane. Functionally, part of the twin-arginine translocation (Tat) system that transports large folded proteins containing a characteristic twin-arginine motif in their signal peptide across membranes. TatA could form the protein-conducting channel of the Tat system. The sequence is that of Sec-independent protein translocase protein TatA from Anaeromyxobacter sp. (strain Fw109-5).